The chain runs to 2036 residues: Transmembrane channel-like protein (2036 aa).

Disordered regions lie at residues 1–178 and 194–243; these read MQND…IDDE and SVRG…ESTQ. Residues 1–353 lie on the Cytoplasmic side of the membrane; the sequence is MQNDEEPAAA…GVASYFTFLR (353 aa). The segment covering 58–73 has biased composition (low complexity); it reads VGSSSSNGNTSNVATG. The segment covering 74-90 has biased composition (polar residues); it reads ANSENNSGVTSPHQLSV. Residues 125–134 are compositionally biased toward basic and acidic residues; sequence ASQEDHRSYE. The segment covering 166–178 has biased composition (acidic residues); it reads FDEDGGGGDIDDE. A compositionally biased stretch (basic residues) spans 198-208; that stretch reads YRGKRGSRSSR. The segment covering 216–225 has biased composition (basic and acidic residues); the sequence is HVLDSVERRR. Residues 227–243 are compositionally biased toward polar residues; sequence SVYTTSSEEGTNQESTQ. Residues 354–374 traverse the membrane as a helical segment; sequence WLMWVNIMIAIPLVAFVIGPE. Residues 375–395 are Extracellular-facing; sequence YFATKHGETDPRKRMSDPEAR. Residues 396–418 form a helical membrane-spanning segment; that stretch reads VAGNLFTFWEFEGYLKYSPMFYG. Topologically, residues 419 to 432 are cytoplasmic; sequence YYSSTSGISTSGYK. The helical transmembrane segment at 433-453 threads the bilayer; sequence LPLAYFLTAVLVYIYSFVATL. The Extracellular segment spans residues 454-526; that stretch reads RKMAENSRNS…NRNWRVILQR (73 aa). Residues 527-547 form a helical membrane-spanning segment; the sequence is ILVNILVMGLLGLSGATVVLL. The Cytoplasmic portion of the chain corresponds to 548–567; the sequence is VNHSEDLAKHDNWLSRNAVN. A helical membrane pass occupies residues 568-588; it reads VTMTLLSFFLPMIFEALGLFE. Over 589–599 the chain is Extracellular; it reads NWHPRQQLRLQ. Residues 600-620 form a helical membrane-spanning segment; sequence LARIMILNMLNLYSLMFSFIY. Topologically, residues 621–1308 are cytoplasmic; that stretch reads KINSKEKPLQ…ILTLINNQGQ (688 aa). 5 disordered regions span residues 789 to 839, 860 to 967, 996 to 1027, 1066 to 1143, and 1186 to 1205; these read TTAT…TEAT, KPLG…TDQA, FFTS…NATP, LRGR…EGSE, and GSTT…KQLT. The span at 870 to 885 shows a compositional bias: polar residues; it reads IPNSTTNSATLSTIPA. The span at 886 to 906 shows a compositional bias: low complexity; it reads TLNTTNLPLNSTTKLTTTTST. Residues 933–952 are compositionally biased toward polar residues; that stretch reads TSDAPDNNSYSDITDYSSEP. A compositionally biased stretch (acidic residues) spans 953-967; that stretch reads SEIEDFDEQESTDQA. 3 stretches are compositionally biased toward low complexity: residues 1069 to 1083, 1091 to 1100, and 1107 to 1130; these read RITT…STTT, RTTTTELTST, and TTES…SSST. Residues 1309–1329 traverse the membrane as a helical segment; the sequence is VWMGIFFSPGLVLINLVKLMI. The Extracellular portion of the chain corresponds to 1330 to 1358; the sequence is MMYFRSWIVLTCNVPHEVVFKASKSNNFY. Residues 1359-1379 form a helical membrane-spanning segment; sequence LSLLLTMLFLCVLPVGYAIVW. Topologically, residues 1380-1423 are cytoplasmic; it reads LRPSWHCGPFSEYNRIAEFITNTTRNALPKQLHEPLDYLTSSST. Residues 1424 to 1444 form a helical membrane-spanning segment; that stretch reads VIPLLLLLILIIYYLVSLTGA. The Extracellular portion of the chain corresponds to 1445 to 2036; the sequence is LREANQDLRT…RIDIENEHEK (592 aa). 3 disordered regions span residues 1527-1572, 1592-1841, and 1859-1990; these read LRKG…SRLQ, ERAR…SRQG, and KKDD…IPTI. Basic and acidic residues-rich tracts occupy residues 1538–1566, 1614–1640, 1658–1668, 1727–1743, and 1777–1793; these read SFVR…DKRF, KETH…DKKD, SPKDNEHDPDT, HIVD…EDKP, and PEPE…ERSS. A compositionally biased stretch (polar residues) spans 1806–1838; it reads NEPSGTEEQDRSLPSPTPSQGQGHHQRQLSVLS. Residues 1890–1899 are compositionally biased toward low complexity; that stretch reads VLSSVSSSTA. A compositionally biased stretch (pro residues) spans 1903–1914; that stretch reads PPTPEPESPTPS. The segment covering 1976–1990 has biased composition (polar residues); that stretch reads QDSQSSIWSDNIPTI.

It belongs to the TMC family. In terms of tissue distribution, expressed in multi-dendritic neurons of the labellum (md-L), which extend elaborate dendritic arbors innervating the bases of taste hairs (at protein level). In larvae, expressed in class I and class II dendritic arborization (da) neurons and bipolar dendrite (bd) neurons (at protein level). In adults, expressed in various sensory neurons including those in the mouth parts, olfactory neurons in the antenna, wing bristle neurons, haltere neurons, arista neurons, and many other sensory neurons, including a subset of chordotonal (Cho) neurons. Expressed in md-L axon terminals, including those that project into the subesophageal zone (SEZ). Also expressed in a small number of local neurons in the adult ventral nerve cord (VNC), and projections extending from a few neurons in the legs or wing hinges. In the adult mouth, expressed in a few multi-dendritic neurons of the ventral cibarial sensory organ (VCSO); the multiple elaborate dendritic branches form a brush-like structure that faces the luminal side of the food-passing tunnel. Also expressed in the oviduct and uterus of adult females.

Its subcellular location is the cell membrane. It is found in the cell projection. The protein localises to the dendrite. Functionally, probable ion channel. Component of mechanosensitive neurons that participates in proprioception, sensing food texture, and directing egg-laying site selection (oviposition). Component of multi-dendritic neurons of the labellum (md-L) where it is required for sensing the hardness and viscosity of their food, enabling them to behaviorally discriminate their preferred softness and smoothness from harder and stickier food options. Required as part of oviposition site selection process to relay mechanosensory and chemosensory information on the hardness and sweetness of potential egg-laying substrates, thus ensuring females select the most optimal site for their eggs survival. Females determine the softest substrate for their eggs first by making a coarse evaluation of substrate hardness using mechanosensitive channels nan and Piezo in the leg tarsal bristles, followed by a much finer assessment using nan, iav and Tmc mechanosensitive channels on the labellum. This protein is required to sense subtle differences in substrate stiffness (between 0.25% and 0.3% agarose), likely acting in the md-L neurons. Also required in neurons on the labellum, including the md-Ls, and possibly in the brain, to inhibit discrimination of egg-laying substrates of different hardness if the substrate contains sucrose. During oviposition evaluation, activation of sweet neurons by sucrose enhances the activity of the Tmc neurons resulting in females losing their softness preference in favor of egg-laying sites that contain sucrose. Acts in the larvae peripheral sensory neurons, to contribute to proprioception and sensory feedback for normal forward crawling behavior. Required for the normal activity of the proprioceptive sensory dendrites, ddaE which show preferential responses to forward locomotion, and ddaD which show preferential responses to backward locomotion. The polypeptide is Transmembrane channel-like protein (Drosophila melanogaster (Fruit fly)).